We begin with the raw amino-acid sequence, 426 residues long: Squamosa promoter-binding-like protein 10 (426 aa).

The SBP-type zinc-finger motif lies at 178–255 (PPRCQAEGCK…AEHNRRRRKP (78 aa)). Zn(2+) contacts are provided by cysteine 181, cysteine 186, cysteine 203, histidine 206, cysteine 222, cysteine 225, histidine 229, and cysteine 241. The short motif at 238 to 254 (KRSCRKRLAEHNRRRRK) is the Bipartite nuclear localization signal element. Low complexity-rich tracts occupy residues 268 to 287 (DAAA…AATS) and 401 to 417 (SDQN…NNNN). 2 disordered regions span residues 268 to 290 (DAAA…SYTG) and 392 to 426 (PSTA…VDFM).

In terms of tissue distribution, expressed in stems, leaf sheaths, and young panicles.

It localises to the nucleus. Trans-acting factor that binds specifically to the consensus nucleotide sequence 5'-TNCGTACAA-3'. In Oryza sativa subsp. indica (Rice), this protein is Squamosa promoter-binding-like protein 10 (SPL10).